The sequence spans 539 residues: 3-hydroxy-3-methylglutaryl-coenzyme A reductase 1 (539 aa).

A helical membrane pass occupies residues 63–83 (FATVVCQLASVVYLLSLFAHP). Residues 84–124 (DAPATTTGDDDDGQGGSRRARPAAAEPAPMHGHGGGMMEAD) form a linker region. A disordered region spans residues 87-116 (ATTTGDDDDGQGGSRRARPAAAEPAPMHGH). Over residues 105–114 (PAAAEPAPMH) the composition is skewed to low complexity. The tract at residues 125–539 (DEEIVAAVAS…SSKDVAKAAS (415 aa)) is catalytic. The active-site Charge relay system is Glu218. A glycan (N-linked (GlcNAc...) asparagine) is linked at Asn282. Active-site charge relay system residues include Lys350 and Asp426. A helical membrane pass occupies residues 496-516 (LATIVAGSVLAGELSLLAALA). Residue His524 is the Proton donor of the active site. Residue Asn528 is glycosylated (N-linked (GlcNAc...) asparagine).

The protein belongs to the HMG-CoA reductase family.

Its subcellular location is the endoplasmic reticulum membrane. It carries out the reaction (R)-mevalonate + 2 NADP(+) + CoA = (3S)-3-hydroxy-3-methylglutaryl-CoA + 2 NADPH + 2 H(+). Its pathway is metabolic intermediate biosynthesis; (R)-mevalonate biosynthesis; (R)-mevalonate from acetyl-CoA: step 3/3. In terms of biological role, catalyzes the synthesis of mevalonate. The specific precursor of all isoprenoid compounds present in plants. The protein is 3-hydroxy-3-methylglutaryl-coenzyme A reductase 1 (HMG1) of Oryza sativa subsp. indica (Rice).